We begin with the raw amino-acid sequence, 652 residues long: Type III restriction-modification enzyme StyLTI Mod subunit (652 aa).

The interval aspartate 135–tyrosine 138 is binding of S-adenosyl methionine.

The protein belongs to the N(4)/N(6)-methyltransferase family. In terms of assembly, homodimer, also forms a functional restriction-competent complex with Res.

The catalysed reaction is a 2'-deoxyadenosine in DNA + S-adenosyl-L-methionine = an N(6)-methyl-2'-deoxyadenosine in DNA + S-adenosyl-L-homocysteine + H(+). A beta subtype methylase that binds the system-specific DNA recognition site 5'-CAGAG-3' and methylates A-4 (of only 1 strand as the other does not have an A residue). DNA restriction requires both the Res and Mod subunits. The protein is Type III restriction-modification enzyme StyLTI Mod subunit of Salmonella typhimurium (strain LT2 / SGSC1412 / ATCC 700720).